Reading from the N-terminus, the 265-residue chain is Apolipoprotein A-I (265 aa).

The N-terminal stretch at 1–16 (MKAAVLIWLFLMGSQA) is a signal peptide. Repeat copies occupy residues 66 to 87 (LKLL…EQLG) and 88 to 109 (PVTQ…QEMS). The tract at residues 66-265 (LKLLDNWDSL…EEYTKKLSSQ (200 aa)) is 10 X approximate tandem repeats. Position 108 is a methionine sulfoxide (methionine 108). The 3; half-length repeat unit spans residues 110-120 (KDLEEVKAQVQ). 5 repeat units span residues 121–142 (PYLD…QKLE), 143–164 (PLRT…EKLS), 165–186 (PLAE…TQLA), 187–208 (PYSD…ENSG), and 209–230 (ASLA…EKAK). Methionine sulfoxide is present on methionine 134. A 9; half-length repeat occupies 231–241 (PALDDLRQGLL). Repeat 10 spans residues 242 to 265 (PVLESFKVSFLSALEEYTKKLSSQ).

This sequence belongs to the apolipoprotein A1/A4/E family. As to quaternary structure, homodimer. Interacts with APOA1BP and CLU. Component of a sperm activating protein complex (SPAP), consisting of APOA1, an immunoglobulin heavy chain, an immunoglobulin light chain and albumin. Interacts with NDRG1. Interacts with SCGB3A2. Interacts with NAXE and YJEFN3. Glycosylated. Post-translationally, palmitoylated. In terms of processing, phosphorylation sites are present in the extracellular medium.

The protein localises to the secreted. Its function is as follows. Participates in the reverse transport of cholesterol from tissues to the liver for excretion by promoting cholesterol efflux from tissues and by acting as a cofactor for the lecithin cholesterol acyltransferase (LCAT). As part of the SPAP complex, activates spermatozoa motility. The chain is Apolipoprotein A-I (APOA1) from Aotus nancymaae (Ma's night monkey).